Consider the following 1563-residue polypeptide: Galactose-specific cell agglutination protein gsf2 (1563 aa).

The N-terminal stretch at 1 to 27 (MSVRRFLSTSARALLFTAALLPSLTSG) is a signal peptide. A run of 29 repeats spans residues 203–280 (TTTT…PTTV), 281–358 (TTTT…PTTV), 359–436 (TTTT…PTTV), 437–514 (TTTT…PTTV), 515–592 (TTTT…PTTV), 593–670 (TTTT…PTTV), 671–750 (TTTT…VSAT), 751–825 (TTTT…GTTT), 826–869 (VVIQ…GTTT), 870–913 (VVIQ…GTTT), 914–957 (VVIQ…GTTT), 958–1001 (VVIQ…GTTT), 1002–1045 (VVIQ…GTTT), 1046–1089 (VVIQ…GTTT), 1090–1133 (VVIQ…GTTT), 1134–1140 (VVINTPT), 1141–1162 (TTGSEVLPTTGATGTAGTETQL), 1163–1184 (TTATEVQPTTGATGTAGTETQV), 1185–1200 (TTGTETQATTATETQA), 1201–1221 (TTATEVQTTTGATGTAGTETQ), 1223–1244 (TTATEVQPTTGATGTAGTETQV), 1245–1266 (TTATEVQPTTGATGTAGTETQV), 1267–1282 (TTGTETQATTATETQA), 1283–1304 (TTATEVQTTTGATGTAGTETQA), 1305–1326 (TTATEVQPTTGATGTAGTETQV), 1327–1348 (TTATEVQPTTGATGTAGTETQV), 1349–1364 (TTGTETQATTATETQA), 1365–1386 (TTATEVQTTTGATGTAGTETQV), and 1387–1397 (TTATEVQPTTA). An 8 X 78 AA approximate tandem repeats region spans residues 203 to 825 (TTTTTVGYPG…IPTGTTGTTT (623 aa)). Residues Asn-224, Asn-263, Asn-302, Asn-341, Asn-380, Asn-419, Asn-458, Asn-497, Asn-536, Asn-575, Asn-614, and Asn-653 are each glycosylated (N-linked (GlcNAc...) asparagine). Residue Asn-784 is glycosylated (N-linked (GlcNAc...) asparagine). The segment at 826 to 1140 (VVIQTPTTVT…TTTVVINTPT (315 aa)) is 8 X 44 AA approximate tandem repeats. The segment at 1135–1393 (VINTPTTTGS…TQVTTATEVQ (259 aa)) is disordered. The interval 1141 to 1397 (TTGSEVLPTT…TATEVQPTTA (257 aa)) is 13 X 22 AA approximate tandem repeats. Residues Asn-1510, Asn-1516, Asn-1529, and Asn-1532 are each glycosylated (N-linked (GlcNAc...) asparagine). Ser-1539 carries the GPI-anchor amidated serine lipid modification. The propeptide at 1540–1563 (SAGANKPIAYLTFVSLFVYIVTLI) is removed in mature form.

The protein belongs to the mam3/map4 family.

The protein resides in the cell membrane. Functionally, galactose-specific adhesion protein essential for non-sexual flocculation and filamentous growth. Required for adhesion and filamentous growth through recognition of galactose residues on cell surface glycoconjugates. Induces flocculation when overexpressed. In Schizosaccharomyces pombe (strain 972 / ATCC 24843) (Fission yeast), this protein is Galactose-specific cell agglutination protein gsf2.